The primary structure comprises 89 residues: Small ribosomal subunit protein uS15 (89 aa).

This sequence belongs to the universal ribosomal protein uS15 family. Part of the 30S ribosomal subunit. Forms a bridge to the 50S subunit in the 70S ribosome, contacting the 23S rRNA.

Its function is as follows. One of the primary rRNA binding proteins, it binds directly to 16S rRNA where it helps nucleate assembly of the platform of the 30S subunit by binding and bridging several RNA helices of the 16S rRNA. In terms of biological role, forms an intersubunit bridge (bridge B4) with the 23S rRNA of the 50S subunit in the ribosome. The chain is Small ribosomal subunit protein uS15 from Nostoc punctiforme (strain ATCC 29133 / PCC 73102).